The sequence spans 180 residues: Large ribosomal subunit protein uL5 (180 aa).

The protein belongs to the universal ribosomal protein uL5 family. Part of the 50S ribosomal subunit; part of the 5S rRNA/L5/L18/L25 subcomplex. Contacts the 5S rRNA and the P site tRNA. Forms a bridge to the 30S subunit in the 70S ribosome.

In terms of biological role, this is one of the proteins that bind and probably mediate the attachment of the 5S RNA into the large ribosomal subunit, where it forms part of the central protuberance. In the 70S ribosome it contacts protein S13 of the 30S subunit (bridge B1b), connecting the 2 subunits; this bridge is implicated in subunit movement. Contacts the P site tRNA; the 5S rRNA and some of its associated proteins might help stabilize positioning of ribosome-bound tRNAs. The polypeptide is Large ribosomal subunit protein uL5 (Synechococcus sp. (strain JA-2-3B'a(2-13)) (Cyanobacteria bacterium Yellowstone B-Prime)).